The chain runs to 441 residues: Signal recognition particle 54 kDa protein (441 aa).

GTP-binding positions include 103–110 (GVQGSGKT), 184–188 (DTAGR), and 244–247 (TKMD).

Belongs to the GTP-binding SRP family. SRP54 subfamily. As to quaternary structure, part of the signal recognition particle protein translocation system, which is composed of SRP and FtsY. Archaeal SRP consists of a 7S RNA molecule of 300 nucleotides and two protein subunits: SRP54 and SRP19.

It is found in the cytoplasm. The enzyme catalyses GTP + H2O = GDP + phosphate + H(+). Functionally, involved in targeting and insertion of nascent membrane proteins into the cytoplasmic membrane. Binds to the hydrophobic signal sequence of the ribosome-nascent chain (RNC) as it emerges from the ribosomes. The SRP-RNC complex is then targeted to the cytoplasmic membrane where it interacts with the SRP receptor FtsY. This Aeropyrum pernix (strain ATCC 700893 / DSM 11879 / JCM 9820 / NBRC 100138 / K1) protein is Signal recognition particle 54 kDa protein.